The chain runs to 193 residues: Segregation and condensation protein B (193 aa).

This sequence belongs to the ScpB family. In terms of assembly, homodimer. Homodimerization may be required to stabilize the binding of ScpA to the Smc head domains. Component of a cohesin-like complex composed of ScpA, ScpB and the Smc homodimer, in which ScpA and ScpB bind to the head domain of Smc. The presence of the three proteins is required for the association of the complex with DNA.

The protein localises to the cytoplasm. Participates in chromosomal partition during cell division. May act via the formation of a condensin-like complex containing Smc and ScpA that pull DNA away from mid-cell into both cell halves. The polypeptide is Segregation and condensation protein B (Shouchella clausii (strain KSM-K16) (Alkalihalobacillus clausii)).